A 103-amino-acid chain; its full sequence is Large ribosomal subunit protein bL21 (103 aa).

It belongs to the bacterial ribosomal protein bL21 family. In terms of assembly, part of the 50S ribosomal subunit. Contacts protein L20.

Functionally, this protein binds to 23S rRNA in the presence of protein L20. The chain is Large ribosomal subunit protein bL21 from Mycobacterium tuberculosis (strain ATCC 25618 / H37Rv).